The following is a 62-amino-acid chain: Large ribosomal subunit protein bL28 (62 aa).

Belongs to the bacterial ribosomal protein bL28 family.

The chain is Large ribosomal subunit protein bL28 from Wolinella succinogenes (strain ATCC 29543 / DSM 1740 / CCUG 13145 / JCM 31913 / LMG 7466 / NCTC 11488 / FDC 602W) (Vibrio succinogenes).